The primary structure comprises 427 residues: 3-phosphoshikimate 1-carboxyvinyltransferase (427 aa).

Lysine 23, serine 24, and arginine 28 together coordinate 3-phosphoshikimate. Lysine 23 is a phosphoenolpyruvate binding site. The phosphoenolpyruvate site is built by glycine 97 and arginine 125. Residues serine 170, serine 171, glutamine 172, serine 198, aspartate 314, asparagine 337, and lysine 341 each coordinate 3-phosphoshikimate. A phosphoenolpyruvate-binding site is contributed by glutamine 172. Residue aspartate 314 is the Proton acceptor of the active site. Positions 345, 387, and 412 each coordinate phosphoenolpyruvate.

It belongs to the EPSP synthase family. As to quaternary structure, monomer.

The protein resides in the cytoplasm. The enzyme catalyses 3-phosphoshikimate + phosphoenolpyruvate = 5-O-(1-carboxyvinyl)-3-phosphoshikimate + phosphate. The protein operates within metabolic intermediate biosynthesis; chorismate biosynthesis; chorismate from D-erythrose 4-phosphate and phosphoenolpyruvate: step 6/7. Functionally, catalyzes the transfer of the enolpyruvyl moiety of phosphoenolpyruvate (PEP) to the 5-hydroxyl of shikimate-3-phosphate (S3P) to produce enolpyruvyl shikimate-3-phosphate and inorganic phosphate. The protein is 3-phosphoshikimate 1-carboxyvinyltransferase of Buchnera aphidicola subsp. Acyrthosiphon pisum (strain Tuc7).